A 421-amino-acid polypeptide reads, in one-letter code: POU domain, class 4, transcription factor 1 (421 aa).

Residues Arg-57–Ile-66 carry the POU-IV box motif. Disordered stretches follow at residues Ser-94–Leu-117 and Gly-133–His-200. Basic residues predominate over residues Ala-99–His-108. Over residues Gly-133–Gly-186 the composition is skewed to gly residues. The 78-residue stretch at Asp-262–Glu-339 folds into the POU-specific domain. The segment at residues Lys-357–Lys-416 is a DNA-binding region (homeobox).

The protein belongs to the POU transcription factor family. Class-4 subfamily. Interacts (via N-terminus) with RIT2; the interaction controls POU4F1 transactivation activity on some neuronal target genes. Isoform 1 interacts with POU4F2 isoform 2; this interaction inhibits both POU4F1 DNA-binding and transcriptional activities. Isoform 1 interacts (C-terminus) with ESR1 (via DNA-binding domain); this interaction decreases the estrogen receptor ESR1 transcriptional activity in a DNA- and ligand 17-beta-estradiol-independent manner. Expressed in mature osteoclasts (at protein level). Brain, peripheral sensory nervous system and retina. In the adult nervous system, predominates in the medial habenula, superficial gray of the superior colliculus, red nucleus, mesencephalic nucleus of the trigeminal ganglion, nucleus ambiguus, inferior olivary nucleus, and peripheral sensory ganglia.

It is found in the nucleus. Its subcellular location is the cytoplasm. In terms of biological role, multifunctional transcription factor with different regions mediating its different effects. Acts by binding (via its C-terminal domain) to sequences related to the consensus octamer motif 5'-ATGCAAAT-3' in the regulatory regions of its target genes. Regulates the expression of specific genes involved in differentiation and survival within a subset of neuronal lineages. It has been shown that activation of some of these genes requires its N-terminal domain, maybe through a neuronal-specific cofactor. Activates BCL2 expression and protects neuronal cells from apoptosis (via the N-terminal domain). Induces neuronal process outgrowth and the coordinate expression of genes encoding synaptic proteins. Exerts its major developmental effects in somatosensory neurons and in brainstem nuclei involved in motor control. Stimulates the binding affinity of the nuclear estrogene receptor ESR1 to DNA estrogen response element (ERE), and hence modulates ESR1-induced transcriptional activity. May positively regulate POU4F2 and POU4F3. Regulates dorsal root ganglion sensory neuron specification and axonal projection into the spinal cord. Plays a role in TNFSF11-mediated terminal osteoclast differentiation. Negatively regulates its own expression interacting directly with a highly conserved autoregulatory domain surrounding the transcription initiation site. Functionally, able to act as transcription factor, cannot regulate the expression of the same subset of genes than isoform 1. Does not have antiapoptotic effect on neuronal cells. The protein is POU domain, class 4, transcription factor 1 (Pou4f1) of Mus musculus (Mouse).